A 930-amino-acid chain; its full sequence is Vacuolar membrane protease (930 aa).

Residues 1–28 (MPQEEVHDTSSVSDDNLTNTGGGGSNYY) form a disordered region. At 1–49 (MPQEEVHDTSSVSDDNLTNTGGGGSNYYNSHNQPNVFVRAIRSIFGYRK) the chain is on the cytoplasmic side. Residues 50 to 70 (TSLTLFVILTIIFTIALSLYD) traverse the membrane as a helical segment. The Vacuolar segment spans residues 71-379 (NNLDLTIELP…YFFSSPISAL (309 aa)). An N-linked (GlcNAc...) asparagine glycan is attached at asparagine 163. Zn(2+)-binding residues include histidine 177 and aspartate 189. Catalysis depends on glutamate 222, which acts as the Proton acceptor. Residues glutamate 223, glutamate 248, and histidine 320 each contribute to the Zn(2+) site. Residue asparagine 354 is glycosylated (N-linked (GlcNAc...) asparagine). The chain crosses the membrane as a helical span at residues 380-400 (VTINSVLIVLFPILSGPLLFI). Over 401–411 (TVRYKKWKIGT) the chain is Cytoplasmic. The chain crosses the membrane as a helical span at residues 412–432 (SNFLSLPLAIVLTVAIVMIVV). Residues 433-449 (NQGFQIANPFLPSSHPL) lie on the Vacuolar side of the membrane. A helical membrane pass occupies residues 450–470 (LLVATTTSISLLIYYVFLNGV). The Cytoplasmic segment spans residues 471–480 (NWVSPSGDQK). The chain crosses the membrane as a helical span at residues 481–501 (LITIIEISFIYWLILIYVTHG). Topologically, residues 502–514 (LSQNKIGDDHTGE) are vacuolar. Residues 515-535 (FPFTVLFFLEATASLFGLIGW) form a helical membrane-spanning segment. The Cytoplasmic portion of the chain corresponds to 536–598 (TFSRSIKQSS…FGYDWSLQYL (63 aa)). Residues 542-570 (KQSSNDGSDEPLLTGTAERYGSDDTDEDE) are disordered. A helical transmembrane segment spans residues 599–619 (LIVPISSLIIFNSGWLVLDGI). A glycan (N-linked (GlcNAc...) asparagine) is linked at asparagine 620. Over 620–631 (NKSIQESFAAEN) the chain is Vacuolar. A helical transmembrane segment spans residues 632–652 (LIYLLIQLFSQFWILPILPFV). The Cytoplasmic portion of the chain corresponds to 653-657 (YKLNR). A helical membrane pass occupies residues 658 to 678 (FIVFGLTIFAISGVALISFLD). The Vacuolar portion of the chain corresponds to 679 to 930 (PFNQENPLKL…LVSVSLKIEV (252 aa)). N-linked (GlcNAc...) asparagine glycosylation is found at asparagine 697, asparagine 768, asparagine 808, and asparagine 890.

The protein belongs to the peptidase M28 family. Zn(2+) serves as cofactor.

Its subcellular location is the vacuole membrane. Functionally, may be involved in vacuolar sorting and osmoregulation. This is Vacuolar membrane protease from Candida dubliniensis (strain CD36 / ATCC MYA-646 / CBS 7987 / NCPF 3949 / NRRL Y-17841) (Yeast).